A 501-amino-acid polypeptide reads, in one-letter code: G protein-activated inward rectifier potassium channel 1 (501 aa).

The segment at Met-1–Lys-40 is disordered. Residues Met-1 to Trp-80 are Cytoplasmic-facing. Positions Ser-18–Leu-37 are enriched in low complexity. The chain crosses the membrane as a helical span at residues Arg-81 to Ile-105. Residues Ala-106–Asn-129 lie on the Extracellular side of the membrane. An N-linked (GlcNAc...) asparagine glycan is attached at Asn-119. Positions Phe-130–Glu-141 form an intramembrane region, helical; Pore-forming. The pore-forming intramembrane region spans Ala-142–Tyr-148. The Selectivity filter signature appears at Thr-143–Tyr-148. The Extracellular portion of the chain corresponds to Arg-149 to Glu-157. The chain crosses the membrane as a helical span at residues Gly-158 to Cys-179. The Cytoplasmic segment spans residues Met-180 to Thr-501. A polyphosphoinositide (PIP2)-binding region spans residues Ile-182–Leu-209. Phosphoserine occurs at positions 385 and 424. Residues Thr-456 to Val-467 show a composition bias toward polar residues. Residues Thr-456–Thr-501 are disordered.

Belongs to the inward rectifier-type potassium channel (TC 1.A.2.1) family. KCNJ3 subfamily. Associates with KCNJ5/GIRK4 or KCNJ6/GIRK2 to form a G-protein activated heteromultimer pore-forming unit. The resulting inward current is much larger. Associates with KCNJ9/GIRK3 to form a G-protein activated heteromultimer pore-forming unit.

The protein localises to the membrane. The catalysed reaction is K(+)(in) = K(+)(out). With respect to regulation, heteromultimer composed of KCNJ3/GIRK1 and KCNJ5/GIRK4 is activated by phosphatidylinositol 4,5 biphosphate (PtdIns(4,5)P2). Functionally, inward rectifier potassium channels are characterized by a greater tendency to allow potassium to flow into the cell rather than out of it. Their voltage dependence is regulated by the concentration of extracellular potassium; as external potassium is raised, the voltage range of the channel opening shifts to more positive voltages. The inward rectification is mainly due to the blockage of outward current by internal magnesium. This potassium channel is controlled by G proteins. This receptor plays a crucial role in regulating the heartbeat. Forms a functional channel in association with KCNJ9/GIRK3. This chain is G protein-activated inward rectifier potassium channel 1 (Kcnj3), found in Rattus norvegicus (Rat).